Reading from the N-terminus, the 99-residue chain is Endothelin receptor type B (99 aa).

Topologically, residues P1–K8 are extracellular. A disulfide bridge links C7 with C88. Residues L9 to I30 form a helical membrane-spanning segment. Residues D31–T51 lie on the Cytoplasmic side of the membrane. A helical membrane pass occupies residues A52–I76. Over T77 to M99 the chain is Extracellular.

It belongs to the G-protein coupled receptor 1 family. Endothelin receptor subfamily. EDNRB sub-subfamily.

Its subcellular location is the cell membrane. Functionally, non-specific receptor for endothelin 1, 2, and 3. Mediates its action by association with G proteins that activate a phosphatidylinositol-calcium second messenger system. The chain is Endothelin receptor type B (EDNRB) from Macaca fascicularis (Crab-eating macaque).